Reading from the N-terminus, the 253-residue chain is MANLGCWMLVLFVATWSDLGLCKKRPKPGGWNTGGSRYPGQGSPGGNRYPPQGGGGWGQPHGGGWGQPHGGGWGQPHGGGWGQPHGGGWGQGGGTHSQWNKPSKPKTSMKHMAGAAAAGAVVGGLGGYMLGSAMSRPLIHFGNDYEDRYYRENMYRYPNQVYYRPVDQYSNQNNFVHDCVNITIKQHTVTTTTKGENFTETDVKMMERVVEQMCITQYEKESQAYYQRGSSMVFFSSPPVILLISFLIFLIVG.

The signal sequence occupies residues 1 to 22 (MANLGCWMLVLFVATWSDLGLC). The tract at residues 23-230 (KKRPKPGGWN…ESQAYYQRGS (208 aa)) is interaction with GRB2, ERI3 and SYN1. Residues 26 to 108 (PKPGGWNTGG…WNKPSKPKTS (83 aa)) are disordered. Repeat copies occupy residues 51–59 (PQGGGGWGQ), 60–67 (PHGGGWGQ), 68–75 (PHGGGWGQ), 76–83 (PHGGGWGQ), and 84–91 (PHGGGWGQ). Residues 51–91 (PQGGGGWGQPHGGGWGQPHGGGWGQPHGGGWGQPHGGGWGQ) are 5 X 8 AA tandem repeats of P-H-G-G-G-W-G-Q. Over residues 52 to 95 (QGGGGWGQPHGGGWGQPHGGGWGQPHGGGWGQPHGGGWGQGGGT) the composition is skewed to gly residues. Residues His-61, Gly-62, Gly-63, His-69, Gly-70, Gly-71, His-77, Gly-78, Gly-79, His-85, Gly-86, and Gly-87 each contribute to the Cu(2+) site. The cysteines at positions 179 and 214 are disulfide-linked. Asn-181 and Asn-197 each carry an N-linked (GlcNAc...) asparagine glycan. A lipid anchor (GPI-anchor amidated serine) is attached at Ser-230. Positions 231 to 253 (SMVFFSSPPVILLISFLIFLIVG) are cleaved as a propeptide — removed in mature form.

The protein belongs to the prion family. Monomer and homodimer. Has a tendency to aggregate into amyloid fibrils containing a cross-beta spine, formed by a steric zipper of superposed beta-strands. Soluble oligomers may represent an intermediate stage on the path to fibril formation. Copper binding may promote oligomerization. Interacts with GRB2, APP, ERI3/PRNPIP and SYN1. Mislocalized cytosolically exposed PrP interacts with MGRN1; this interaction alters MGRN1 subcellular location and causes lysosomal enlargement. Interacts with KIAA1191.

The protein localises to the cell membrane. It is found in the golgi apparatus. Its primary physiological function is unclear. Has cytoprotective activity against internal or environmental stresses. May play a role in neuronal development and synaptic plasticity. May be required for neuronal myelin sheath maintenance. May play a role in iron uptake and iron homeostasis. Soluble oligomers are toxic to cultured neuroblastoma cells and induce apoptosis (in vitro). Association with GPC1 (via its heparan sulfate chains) targets PRNP to lipid rafts. Also provides Cu(2+) or Zn(2+) for the ascorbate-mediated GPC1 deaminase degradation of its heparan sulfate side chains. The protein is Major prion protein (PRNP) of Trachypithecus francoisi (Francois' leaf monkey).